A 91-amino-acid polypeptide reads, in one-letter code: Small ribosomal subunit protein bS18 (91 aa).

Residues 1–27 (MTQQSNTERKPRAKGPKRPRKPKVDPF) form a disordered region. Positions 11 to 21 (PRAKGPKRPRK) are enriched in basic residues.

Belongs to the bacterial ribosomal protein bS18 family. In terms of assembly, part of the 30S ribosomal subunit. Forms a tight heterodimer with protein bS6.

In terms of biological role, binds as a heterodimer with protein bS6 to the central domain of the 16S rRNA, where it helps stabilize the platform of the 30S subunit. The sequence is that of Small ribosomal subunit protein bS18 from Deinococcus geothermalis (strain DSM 11300 / CIP 105573 / AG-3a).